The primary structure comprises 155 residues: Regulatory protein RecX (155 aa).

Belongs to the RecX family.

The protein localises to the cytoplasm. Modulates RecA activity. This Pseudomonas fluorescens (strain ATCC BAA-477 / NRRL B-23932 / Pf-5) protein is Regulatory protein RecX.